The sequence spans 335 residues: Protein BIG1 (335 aa).

Residues 1 to 17 (MQTVLKYLLLIMCGSFC) form the signal peptide. The Lumenal segment spans residues 20 to 275 (EELQNQTNVP…FDSQLIENNR (256 aa)). N-linked (GlcNAc...) asparagine glycans are attached at residues Asn24 and Asn144. The chain crosses the membrane as a helical span at residues 276 to 296 (GLLQLIFTILVGYILIQFFFT). Residues 297 to 335 (KKTIVDEKITNKKDNVKQTSPQLLKKVQEIQKKPSQQVS) are Cytoplasmic-facing.

Belongs to the BIG1 family. N-glycosylated.

It localises to the endoplasmic reticulum membrane. Its function is as follows. Required for normal beta-1,6-glucan synthesis. The sequence is that of Protein BIG1 (BIG1) from Saccharomyces cerevisiae (strain ATCC 204508 / S288c) (Baker's yeast).